Consider the following 175-residue polypeptide: DELTA-stichotoxin-She4b (175 aa).

Residues 1–10 (ALAGTIIAGA) are plays an important role in the hemolytic activity. The N-terminal region stretch occupies residues 9–28 (GASLTFQVLDKVLEELGKVS). 7 residues coordinate phosphocholine: Ser-52, Val-85, Ser-103, Pro-105, Tyr-131, Tyr-135, and Tyr-136. A trp-rich region, which is important for the binding to lipid membrane region spans residues 103 to 118 (SVPFDYNWYSNWWDVK). The short motif at 141–143 (RGD) is the Cell attachment site, crucial for protein stability element.

Octamer or nonamer in membranes. Monomer in the soluble state. Originally described as forming tetramer in the presence of a lipidic interface. In terms of tissue distribution, expressed in tentacles and mesenteric filaments.

Its subcellular location is the secreted. The protein resides in the nematocyst. It is found in the target cell membrane. In terms of biological role, pore-forming protein that forms cations-selective hydrophilic pores of around 1 nm and causes cardiac stimulation and cytolysis. Pore formation is a multi-step process that involves specific recognition of membrane sphingomyelin (but neither cholesterol nor phosphatidylcholine) using aromatic rich region and adjacent phosphocholine (POC) binding site, firm binding to the membrane (mainly driven by hydrophobic interactions) accompanied by the transfer of the N-terminal region to the lipid-water interface and finally pore formation after oligomerization of monomers. Cytolytic effects include red blood cells hemolysis, platelet aggregation and lysis, cytotoxic and cytostatic effects on fibroblasts. Lethality in mammals has been ascribed to severe vasospasm of coronary vessels, cardiac arrhythmia, and inotropic effects. This Stichodactyla helianthus (Sun anemone) protein is DELTA-stichotoxin-She4b.